The chain runs to 427 residues: Peptidase B (427 aa).

Lysine 195 and aspartate 200 together coordinate Mn(2+). Residue lysine 207 is part of the active site. 3 residues coordinate Mn(2+): aspartate 218, aspartate 277, and glutamate 279. Residue arginine 281 is part of the active site.

Belongs to the peptidase M17 family. Homohexamer. Mn(2+) serves as cofactor.

It localises to the cytoplasm. The catalysed reaction is Release of an N-terminal amino acid, Xaa, from a peptide or arylamide. Xaa is preferably Glu or Asp but may be other amino acids, including Leu, Met, His, Cys and Gln.. Its function is as follows. Probably plays an important role in intracellular peptide degradation. In Escherichia coli (strain ATCC 8739 / DSM 1576 / NBRC 3972 / NCIMB 8545 / WDCM 00012 / Crooks), this protein is Peptidase B.